Here is a 119-residue protein sequence, read N- to C-terminus: Phosphoribosyl-AMP cyclohydrolase (119 aa).

Asp-78 provides a ligand contact to Mg(2+). Cys-79 is a Zn(2+) binding site. Mg(2+)-binding residues include Asp-80 and Asp-82. Residues Cys-95 and Cys-102 each coordinate Zn(2+).

The protein belongs to the PRA-CH family. Homodimer. It depends on Mg(2+) as a cofactor. Zn(2+) is required as a cofactor.

It is found in the cytoplasm. It catalyses the reaction 1-(5-phospho-beta-D-ribosyl)-5'-AMP + H2O = 1-(5-phospho-beta-D-ribosyl)-5-[(5-phospho-beta-D-ribosylamino)methylideneamino]imidazole-4-carboxamide. The protein operates within amino-acid biosynthesis; L-histidine biosynthesis; L-histidine from 5-phospho-alpha-D-ribose 1-diphosphate: step 3/9. Catalyzes the hydrolysis of the adenine ring of phosphoribosyl-AMP. This is Phosphoribosyl-AMP cyclohydrolase from Jannaschia sp. (strain CCS1).